Here is a 305-residue protein sequence, read N- to C-terminus: Uridylate cyclase (305 aa).

Mn(2+) contacts are provided by Asp-58 and Asp-102.

It belongs to the adenylyl cyclase class-4/guanylyl cyclase family. Pyrimidine cyclase subfamily. As to quaternary structure, homodimer. It depends on Mn(2+) as a cofactor.

The protein resides in the cytoplasm. It catalyses the reaction GTP = 3',5'-cyclic GMP + diphosphate. It carries out the reaction UTP = 3',5'-cyclic UMP + diphosphate. Its function is as follows. Pycsar (pyrimidine cyclase system for antiphage resistance) provides immunity against bacteriophage. The pyrimidine cyclase (PycC) synthesizes cyclic nucleotides in response to infection; these serve as specific second messenger signals. The signals activate the adjacent effector, leading to bacterial cell death and abortive phage infection. A clade D Pycsar system. In terms of biological role, the pyrimidine cyclase gene of a two-gene Pycsar system, generates cyclic UMP (cUMP) from UTP as well as cGMP from GTP to a lesser extent, has little to no activity on ATP or CTP. Expression of this and adjacent effector MePycTM (AC A0A1C5G2D0) probably confers resistance to bacteriophage. The genes are probably only expressed in response to bacteriophage infection. The polypeptide is Uridylate cyclase (Micromonospora echinofusca).